We begin with the raw amino-acid sequence, 262 residues long: MSVTNKVLVLKVGGALLQCEMGMARLMDTARQLLEKGEQVVLVHGGGCLVDEQLKANGMETVKLDGLRVTPAEQMPIIAGALAGTSNKLLQGAAAKAGVVSMGMSLCDANMVTAVIKDERLGMVGEVSPKDAKALEFILAQGWLPIISSIAMGEDGELLNVNADQAASVLAKLLGGKLVLLSDVSGVLDGKGKLIPSLNSQEIDELVKLGVIEKGMKVKVEAALEVAQWLGQPVQVASWRDSGQMAALIKGEAVGTQIQPQE.

Residues 46–47 (GG), Arg68, and Asn160 each bind substrate.

The protein belongs to the acetylglutamate kinase family. ArgB subfamily.

Its subcellular location is the cytoplasm. The enzyme catalyses N-acetyl-L-glutamate + ATP = N-acetyl-L-glutamyl 5-phosphate + ADP. It participates in amino-acid biosynthesis; L-arginine biosynthesis; N(2)-acetyl-L-ornithine from L-glutamate: step 2/4. In terms of biological role, catalyzes the ATP-dependent phosphorylation of N-acetyl-L-glutamate. This is Acetylglutamate kinase from Shewanella amazonensis (strain ATCC BAA-1098 / SB2B).